We begin with the raw amino-acid sequence, 453 residues long: Dibenzothiophene-sulfone monooxygenase (453 aa).

FMN contacts are provided by Asp-59, Thr-106, His-156, Tyr-160, and Ser-231.

Belongs to the NtaA/SnaA/DszA monooxygenase family. As to quaternary structure, homodimer.

Its subcellular location is the cytoplasm. It carries out the reaction dibenzothiophene 5,5-dioxide + FMNH2 + NADH + O2 = 2'-hydroxybiphenyl-2-sulfinate + FMN + NAD(+) + H2O + H(+). Its pathway is sulfur metabolism; dibenzothiophene degradation. Catalyzes the second step of the '4S' desulfurization pathway that removes covalently bound sulfur from dibenzothiophene (DBT) without breaking carbon-carbon bonds. Metabolizes DBT-sulfone (DBTO2 or DBT 5,5-dioxide) to 2-(2'-hydroxyphenyl)benzene sulphinate (HBPS). This chain is Dibenzothiophene-sulfone monooxygenase, found in Rhodococcus erythropolis (strain XP).